The chain runs to 512 residues: Alanine--glyoxylate aminotransferase 2, mitochondrial (512 aa).

The transit peptide at Met1 to Thr39 directs the protein to the mitochondrion. Lys55 carries the N6-acetyllysine modification. Lys69 carries the N6-acetyllysine; alternate modification. Lys69 is modified (N6-succinyllysine; alternate). Residue Lys82 is modified to N6-acetyllysine. The residue at position 260 (Lys260) is an N6-acetyllysine; alternate. Lys260 is modified (N6-succinyllysine; alternate). The residue at position 302 (Lys302) is an N6-succinyllysine. Lys348 is subject to N6-(pyridoxal phosphate)lysine. N6-acetyllysine; alternate occurs at positions 415 and 418. Residues Lys415 and Lys418 each carry the N6-succinyllysine; alternate modification. Lys452 is subject to N6-acetyllysine.

Belongs to the class-III pyridoxal-phosphate-dependent aminotransferase family. Homotetramer. It depends on pyridoxal 5'-phosphate as a cofactor. Expressed in the liver, lung and kidney.

The protein localises to the mitochondrion. The catalysed reaction is glyoxylate + L-alanine = glycine + pyruvate. It catalyses the reaction (R)-3-amino-2-methylpropanoate + pyruvate = 2-methyl-3-oxopropanoate + L-alanine. It carries out the reaction 3-oxopropanoate + L-alanine = beta-alanine + pyruvate. The enzyme catalyses 2-oxobutanoate + L-alanine = (2S)-2-aminobutanoate + pyruvate. The catalysed reaction is N(omega),N(omega)-dimethyl-L-arginine + pyruvate = 5-(3,3-dimethylguanidino)-2-oxopentanoate + L-alanine. It catalyses the reaction N(omega),N('omega)-dimethyl-L-arginine + pyruvate = 5-(3,3'-dimethylguanidino)-2-oxopentanoate + L-alanine. It carries out the reaction N(omega),N(omega)-dimethyl-L-arginine + glyoxylate = 5-(3,3-dimethylguanidino)-2-oxopentanoate + glycine. The enzyme catalyses N(omega),N('omega)-dimethyl-L-arginine + glyoxylate = 5-(3,3'-dimethylguanidino)-2-oxopentanoate + glycine. The catalysed reaction is N(omega)-methyl-L-arginine + pyruvate = 5-(3-methylguanidino)-2-oxopentanoate + L-alanine. It catalyses the reaction N(omega)-methyl-L-arginine + glyoxylate = 5-(3-methylguanidino)-2-oxopentanoate + glycine. It carries out the reaction L-ornithine + pyruvate = 5-amino-2-oxopentanoate + L-alanine. The enzyme catalyses L-ornithine + glyoxylate = 5-amino-2-oxopentanoate + glycine. The catalysed reaction is (2S)-2-aminobutanoate + glyoxylate = 2-oxobutanoate + glycine. It catalyses the reaction N(omega),N(omega)-dimethyl-L-arginine + oxaloacetate = 5-(3,3-dimethylguanidino)-2-oxopentanoate + L-aspartate. It carries out the reaction oxaloacetate + L-alanine = L-aspartate + pyruvate. The enzyme catalyses N(omega),N(omega)-dimethyl-L-arginine + 2-oxobutanoate = 5-(3,3-dimethylguanidino)-2-oxopentanoate + (2S)-2-aminobutanoate. The catalysed reaction is 2-oxopentanoate + N(omega),N(omega)-dimethyl-L-arginine = 5-(3,3-dimethylguanidino)-2-oxopentanoate + L-2-aminopentanoate. It catalyses the reaction 2-oxohexanoate + N(omega),N(omega)-dimethyl-L-arginine = L-2-aminohexanoate + 5-(3,3-dimethylguanidino)-2-oxopentanoate. Its activity is regulated as follows. Inhibited by 5-fluorouracil and 6-fluorouracil. Inhibited by phenylhydrazine, hydroxylamine, l-amino-L-proline, para-chloromercuribenzoate and HgCl2. Functionally, multifunctional aminotransferase with a broad substrate specificity. Catalyzes the conversion of glyoxylate to glycine using alanine as the amino donor. Catalyzes metabolism of not L- but the D-isomer of D-beta-aminoisobutyric acid to generate 2-methyl-3-oxopropanoate and alanine. Catalyzes the transfer of the amino group from beta-alanine to pyruvate to yield L-alanine and 3-oxopropanoate. Can metabolize NG-monomethyl-L-arginine (NMMA), asymmetric NG,NG-dimethyl-L-arginine (ADMA) and symmetric NG,N'G-dimethyl-L-arginine (SDMA). ADMA is a potent inhibitor of nitric-oxide (NO) synthase, and this activity provides mechanism through which the kidney regulates blood pressure. This is Alanine--glyoxylate aminotransferase 2, mitochondrial (Agxt2) from Rattus norvegicus (Rat).